The primary structure comprises 170 residues: Odorant-binding protein 2a (170 aa).

Positions 1–15 are cleaved as a signal peptide; the sequence is MKTLFLGVTLGLAAA. The cysteines at positions 74 and 166 are disulfide-linked.

Belongs to the calycin superfamily. Lipocalin family. In terms of assembly, monomer. In terms of tissue distribution, strongly expressed in the nasal structures, salivary and lachrymal glands, and lung. Expressed in the liver.

It localises to the secreted. Binds and transports small hydrophobic volatile molecules with a higher affinity for aldehydes and large fatty acids, including undecanal, palmitic acid, efficient aldehydes, benzenic aldehydes, heterocyclic aldehydes and aliphatic acids. The sequence is that of Odorant-binding protein 2a (OBP2A) from Homo sapiens (Human).